The following is a 355-amino-acid chain: MAPELSSPSSSPRYTVGYALLPEKVSSVVRPSLVALAADRGVRLVAVDVSRPLAEQGPFDLLVHKMYDRGWRAQLEELAARHPGVPVVVDSPGAIDRLLDRATMLDVVSGLRTPVSVPPQVVVSDAAADADELLARAALRFPLIAKPLAVDGSAESHDMRLVYRRDGVLPLLRAPLVLQEFVNHGGVLFKVYVVGDRATCVRRSSLPDVPARRLLDLDAEPSVPFANISNQPLPPPDDDGGAADDDTPAAGFVDEVARGLRRGLGLHLFNFDMIRERSEEHGDRYFIIDINYFPGYAKMPGYEAALTDFFLEMLRGTRPVPEQLGPGSGLDMEARKLEPGLGIGLRELESGRAQA.

Lys-65 lines the 1D-myo-inositol 1,3,4-trisphosphate pocket. Residues Arg-101 and Lys-146 each contribute to the ATP site. The region spanning 107–318 is the ATP-grasp domain; the sequence is VVSGLRTPVS…FFLEMLRGTR (212 aa). 1D-myo-inositol 1,3,4-trisphosphate-binding residues include His-157 and Lys-190. Residues 179 to 190 and Ser-205 each bind ATP; that span reads QEFVNHGGVLFK. Residues 225–248 are disordered; that stretch reads FANISNQPLPPPDDDGGAADDDTP. Acidic residues predominate over residues 236-247; that stretch reads PDDDGGAADDDT. 3 residues coordinate Mg(2+): Asp-272, Asp-289, and Asn-291. A 1D-myo-inositol 1,3,4-trisphosphate-binding site is contributed by Asn-291.

The protein belongs to the ITPK1 family. Monomer. Mg(2+) serves as cofactor.

The catalysed reaction is 1D-myo-inositol 3,4,5,6-tetrakisphosphate + ATP = 1D-myo-inositol 1,3,4,5,6-pentakisphosphate + ADP + H(+). The enzyme catalyses 1D-myo-inositol 1,3,4-trisphosphate + ATP = 1D-myo-inositol 1,3,4,5-tetrakisphosphate + ADP + H(+). It catalyses the reaction 1D-myo-inositol 1,3,4-trisphosphate + ATP = 1D-myo-inositol 1,3,4,6-tetrakisphosphate + ADP + H(+). Its function is as follows. Kinase that can phosphorylate various inositol polyphosphate such as Ins(3,4,5,6)P4 or Ins(1,3,4)P3 and participates in phytic acid biosynthesis in developing seeds. Phytic acid is the primary storage form of phosphorus in cereal grains and other plant seeds. The chain is Inositol-tetrakisphosphate 1-kinase 4 (ITPK4) from Oryza sativa subsp. indica (Rice).